Reading from the N-terminus, the 401-residue chain is Aspartokinase (401 aa).

It belongs to the aspartokinase family.

The enzyme catalyses L-aspartate + ATP = 4-phospho-L-aspartate + ADP. The protein operates within amino-acid biosynthesis; L-lysine biosynthesis via DAP pathway; (S)-tetrahydrodipicolinate from L-aspartate: step 1/4. Its pathway is amino-acid biosynthesis; L-methionine biosynthesis via de novo pathway; L-homoserine from L-aspartate: step 1/3. It participates in amino-acid biosynthesis; L-threonine biosynthesis; L-threonine from L-aspartate: step 1/5. The sequence is that of Aspartokinase (lysC) from Rickettsia felis (strain ATCC VR-1525 / URRWXCal2) (Rickettsia azadi).